The chain runs to 167 residues: UPF0114 protein in repA1-repA2 intergenic region (167 aa).

The next 3 helical transmembrane spans lie at 15–35, 53–73, and 136–156; these read LMFP…LKFF, LVLI…LVMV, and IILC…MAYI.

It belongs to the UPF0114 family.

Its subcellular location is the cell membrane. The sequence is that of UPF0114 protein in repA1-repA2 intergenic region from Buchnera aphidicola subsp. Pterocomma populeum.